Consider the following 113-residue polypeptide: Nucleoid-associated protein FMG_0513 (113 aa).

The disordered stretch occupies residues 1 to 44 (MGNKFRGGMPGMGNMGNMMKQMQKMQRQMEETQKRLEETEVTAT). A compositionally biased stretch (low complexity) spans 15–26 (MGNMMKQMQKMQ). The segment covering 27–38 (RQMEETQKRLEE) has biased composition (basic and acidic residues).

It belongs to the YbaB/EbfC family. As to quaternary structure, homodimer.

Its subcellular location is the cytoplasm. It localises to the nucleoid. Functionally, binds to DNA and alters its conformation. May be involved in regulation of gene expression, nucleoid organization and DNA protection. This Finegoldia magna (strain ATCC 29328 / DSM 20472 / WAL 2508) (Peptostreptococcus magnus) protein is Nucleoid-associated protein FMG_0513.